The following is a 342-amino-acid chain: UDP-N-acetylglucosamine--N-acetylmuramyl-(pentapeptide) pyrophosphoryl-undecaprenol N-acetylglucosamine transferase (342 aa).

UDP-N-acetyl-alpha-D-glucosamine is bound by residues threonine 10 to glycine 12, asparagine 124, serine 177, and glutamine 275.

Belongs to the glycosyltransferase 28 family. MurG subfamily.

The protein localises to the cell inner membrane. It catalyses the reaction di-trans,octa-cis-undecaprenyl diphospho-N-acetyl-alpha-D-muramoyl-L-alanyl-D-glutamyl-meso-2,6-diaminopimeloyl-D-alanyl-D-alanine + UDP-N-acetyl-alpha-D-glucosamine = di-trans,octa-cis-undecaprenyl diphospho-[N-acetyl-alpha-D-glucosaminyl-(1-&gt;4)]-N-acetyl-alpha-D-muramoyl-L-alanyl-D-glutamyl-meso-2,6-diaminopimeloyl-D-alanyl-D-alanine + UDP + H(+). It functions in the pathway cell wall biogenesis; peptidoglycan biosynthesis. In terms of biological role, cell wall formation. Catalyzes the transfer of a GlcNAc subunit on undecaprenyl-pyrophosphoryl-MurNAc-pentapeptide (lipid intermediate I) to form undecaprenyl-pyrophosphoryl-MurNAc-(pentapeptide)GlcNAc (lipid intermediate II). This is UDP-N-acetylglucosamine--N-acetylmuramyl-(pentapeptide) pyrophosphoryl-undecaprenol N-acetylglucosamine transferase from Campylobacter jejuni subsp. doylei (strain ATCC BAA-1458 / RM4099 / 269.97).